Reading from the N-terminus, the 104-residue chain is Large ribosomal subunit protein uL24 (104 aa).

Belongs to the universal ribosomal protein uL24 family. Part of the 50S ribosomal subunit.

Functionally, one of two assembly initiator proteins, it binds directly to the 5'-end of the 23S rRNA, where it nucleates assembly of the 50S subunit. In terms of biological role, one of the proteins that surrounds the polypeptide exit tunnel on the outside of the subunit. This chain is Large ribosomal subunit protein uL24, found in Pseudomonas entomophila (strain L48).